The following is a 267-amino-acid chain: Integral membrane protein 2C (267 aa).

Thr-37 is modified (phosphothreonine). Residues 55–75 (VGGVCYLSMGMVVLLMGLVFA) traverse the membrane as a helical; Signal-anchor for type II membrane protein segment. Positions 136–230 (FGGGDPADII…LCNGKDTYRL (95 aa)) constitute a BRICHOS domain. An intrachain disulfide couples Cys-163 to Cys-222. N-linked (GlcNAc...) asparagine glycosylation occurs at Asn-169.

It belongs to the ITM2 family. As to quaternary structure, interacts with BACE1. Interacts with APP. Interacts with STMN2. Type I membrane-bound, as well as soluble, furin has a pre-eminent role in ITM2C proteolytic processing. PCSK7 and PCSK5 may also be involved although to a lesser extent. The soluble form of PCSK7 is incapable of processing ITM2C. Fails to undergo shedding by ADAM10 and intramembrane cleavage by SPPL2B. High levels in the brain, specifically in the cerebral cortex, medulla, amygdala, hippocampus, thalamus, caudate nucleus, cerebellum, olfactory lobe and spinal cord. Very low levels in other organs.

The protein localises to the lysosome membrane. The protein resides in the cell membrane. Negative regulator of amyloid-beta peptide production. May inhibit the processing of APP by blocking its access to alpha- and beta-secretase. Binding to the beta-secretase-cleaved APP C-terminal fragment is negligible, suggesting that ITM2C is a poor gamma-secretase cleavage inhibitor. May play a role in TNF-induced cell death and neuronal differentiation. The sequence is that of Integral membrane protein 2C (ITM2C) from Homo sapiens (Human).